A 203-amino-acid polypeptide reads, in one-letter code: MRTIDKRIAPNVRLAATLVARAPALTLAYDARCKSRLAATLDTGEDVALVLPRGTVLRDGDVLVADDGALVRVAAAHEAVLLVRAPDALTLTRAAYHLGNRHTPVEVGAGCLKLEYDPVLADMLTRLGATVERASAPFQPEAGAYGGGHRHGHDATFAEDYALAQQVFDEHHGHSHSRSHDHDHDHDHQHGPSCSHGHHHGHR.

Basic and acidic residues predominate over residues 170-190 (EHHGHSHSRSHDHDHDHDHQH). Residues 170–203 (EHHGHSHSRSHDHDHDHDHQHGPSCSHGHHHGHR) are disordered.

Belongs to the UreE family.

Its subcellular location is the cytoplasm. In terms of biological role, involved in urease metallocenter assembly. Binds nickel. Probably functions as a nickel donor during metallocenter assembly. This is Urease accessory protein UreE from Burkholderia pseudomallei (strain 1710b).